The primary structure comprises 177 residues: Adenine phosphoribosyltransferase (177 aa).

This sequence belongs to the purine/pyrimidine phosphoribosyltransferase family. As to quaternary structure, homodimer.

The protein resides in the cytoplasm. The enzyme catalyses AMP + diphosphate = 5-phospho-alpha-D-ribose 1-diphosphate + adenine. Its pathway is purine metabolism; AMP biosynthesis via salvage pathway; AMP from adenine: step 1/1. Functionally, catalyzes a salvage reaction resulting in the formation of AMP, that is energically less costly than de novo synthesis. This is Adenine phosphoribosyltransferase from Rhodococcus jostii (strain RHA1).